Reading from the N-terminus, the 238-residue chain is Aspartate/glutamate leucyltransferase (238 aa).

It belongs to the R-transferase family. Bpt subfamily.

The protein localises to the cytoplasm. The catalysed reaction is N-terminal L-glutamyl-[protein] + L-leucyl-tRNA(Leu) = N-terminal L-leucyl-L-glutamyl-[protein] + tRNA(Leu) + H(+). It catalyses the reaction N-terminal L-aspartyl-[protein] + L-leucyl-tRNA(Leu) = N-terminal L-leucyl-L-aspartyl-[protein] + tRNA(Leu) + H(+). Functions in the N-end rule pathway of protein degradation where it conjugates Leu from its aminoacyl-tRNA to the N-termini of proteins containing an N-terminal aspartate or glutamate. This is Aspartate/glutamate leucyltransferase from Shewanella oneidensis (strain ATCC 700550 / JCM 31522 / CIP 106686 / LMG 19005 / NCIMB 14063 / MR-1).